The sequence spans 393 residues: Protein FAM47E (393 aa).

The stretch at valine 326–alanine 354 forms a coiled coil.

This sequence belongs to the FAM47 family. Interacts with PRMT5; the interaction is direct. Interacts with WDR77.

Its subcellular location is the nucleus. It is found in the chromosome. It localises to the cytoplasm. Its function is as follows. Promotes histone methylation by localizing the arginine methyltransferase PRMT5 to chromatin. This chain is Protein FAM47E (FAM47E), found in Homo sapiens (Human).